The following is a 192-amino-acid chain: Peptide methionine sulfoxide reductase MsrA 1 (192 aa).

Cys25 is a catalytic residue.

It belongs to the MsrA Met sulfoxide reductase family.

It carries out the reaction L-methionyl-[protein] + [thioredoxin]-disulfide + H2O = L-methionyl-(S)-S-oxide-[protein] + [thioredoxin]-dithiol. It catalyses the reaction [thioredoxin]-disulfide + L-methionine + H2O = L-methionine (S)-S-oxide + [thioredoxin]-dithiol. In terms of biological role, has an important function as a repair enzyme for proteins that have been inactivated by oxidation. Catalyzes the reversible oxidation-reduction of methionine sulfoxide in proteins to methionine. The protein is Peptide methionine sulfoxide reductase MsrA 1 of Rhodopirellula baltica (strain DSM 10527 / NCIMB 13988 / SH1).